A 193-amino-acid polypeptide reads, in one-letter code: 7-methyl-GTP pyrophosphatase (193 aa).

The Proton acceptor role is filled by aspartate 68.

Belongs to the Maf family. YceF subfamily. A divalent metal cation is required as a cofactor.

Its subcellular location is the cytoplasm. The enzyme catalyses N(7)-methyl-GTP + H2O = N(7)-methyl-GMP + diphosphate + H(+). Functionally, nucleoside triphosphate pyrophosphatase that hydrolyzes 7-methyl-GTP (m(7)GTP). May have a dual role in cell division arrest and in preventing the incorporation of modified nucleotides into cellular nucleic acids. The polypeptide is 7-methyl-GTP pyrophosphatase (Chromobacterium violaceum (strain ATCC 12472 / DSM 30191 / JCM 1249 / CCUG 213 / NBRC 12614 / NCIMB 9131 / NCTC 9757 / MK)).